Here is a 695-residue protein sequence, read N- to C-terminus: NADPH--cytochrome P450 reductase (695 aa).

The Lumenal segment spans residues 1 to 8 (MAQLDTLD). Residues 9 to 31 (VVVLAVLLAGSIAYFTKGTFWAV) traverse the membrane as a helical segment. The Cytoplasmic portion of the chain corresponds to 32-695 (AKDPYASSGP…SGSYQEDVWS (664 aa)). One can recognise a Flavodoxin-like domain in the interval 66-221 (CVIFYGSQTG…DFLAWKEPMW (156 aa)). Residues 72–77 (SQTGTA), 123–126 (ATYG), 169–178 (LGNNTYEHYN), and aspartate 204 contribute to the FMN site. The region spanning 277–538 (HNPYIAPIVE…HVRHSNFKLP (262 aa)) is the FAD-binding FR-type domain. Arginine 296 is an NADP(+) binding site. FAD is bound by residues 451 to 454 (RYYS), 469 to 471 (TAV), and 486 to 489 (GVTT). Residues 497-516 (QKQNGDPSPDPHGQTYAING) are disordered. NADP(+) contacts are provided by residues threonine 552, 614–615 (SR), 620–624 (KVYVQ), and glutamate 656. Tryptophan 694 contacts FAD.

Belongs to the NADPH--cytochrome P450 reductase family. The protein in the N-terminal section; belongs to the flavodoxin family. It in the C-terminal section; belongs to the flavoprotein pyridine nucleotide cytochrome reductase family. It depends on FAD as a cofactor. Requires FMN as cofactor.

The protein resides in the endoplasmic reticulum membrane. It localises to the mitochondrion outer membrane. The protein localises to the cell membrane. The catalysed reaction is 2 oxidized [cytochrome P450] + NADPH = 2 reduced [cytochrome P450] + NADP(+) + H(+). Functionally, this enzyme is required for electron transfer from NADP to cytochrome P450 in microsomes. It can also provide electron transfer to heme oxygenase and cytochrome B5. Involved in ergosterol biosynthesis. In Emericella nidulans (strain FGSC A4 / ATCC 38163 / CBS 112.46 / NRRL 194 / M139) (Aspergillus nidulans), this protein is NADPH--cytochrome P450 reductase.